Here is a 420-residue protein sequence, read N- to C-terminus: Phospholipase A1-II 3 (420 aa).

The first 21 residues, methionine 1–alanine 21, serve as a signal peptide directing secretion. N-linked (GlcNAc...) asparagine glycosylation occurs at asparagine 231. Serine 240 acts as the Acyl-ester intermediate in catalysis. Serine 240 serves as the catalytic Charge relay system. Residue asparagine 294 is glycosylated (N-linked (GlcNAc...) asparagine). Catalysis depends on charge relay system residues aspartate 305 and histidine 343. The stretch at valine 367–valine 388 forms a coiled coil. Asparagine 403 carries N-linked (GlcNAc...) asparagine glycosylation.

This sequence belongs to the AB hydrolase superfamily. Lipase family.

The protein resides in the secreted. Acylhydrolase that catalyzes the hydrolysis of phospholipids at the sn-1 position. This Oryza sativa subsp. japonica (Rice) protein is Phospholipase A1-II 3.